Here is a 491-residue protein sequence, read N- to C-terminus: Probable cytosol aminopeptidase (491 aa).

Residues K264 and D269 each contribute to the Mn(2+) site. K276 is a catalytic residue. 3 residues coordinate Mn(2+): D287, D346, and E348. R350 is a catalytic residue.

Belongs to the peptidase M17 family. Requires Mn(2+) as cofactor.

The protein localises to the cytoplasm. It catalyses the reaction Release of an N-terminal amino acid, Xaa-|-Yaa-, in which Xaa is preferably Leu, but may be other amino acids including Pro although not Arg or Lys, and Yaa may be Pro. Amino acid amides and methyl esters are also readily hydrolyzed, but rates on arylamides are exceedingly low.. The catalysed reaction is Release of an N-terminal amino acid, preferentially leucine, but not glutamic or aspartic acids.. Functionally, presumably involved in the processing and regular turnover of intracellular proteins. Catalyzes the removal of unsubstituted N-terminal amino acids from various peptides. This chain is Probable cytosol aminopeptidase, found in Xylella fastidiosa (strain Temecula1 / ATCC 700964).